The following is a 626-amino-acid chain: ATP-dependent RNA helicase cyt-19, mitochondrial (626 aa).

Residues 74 to 103 (ADLAALGVHENVVRAITHGMGYENMTEVQS) carry the Q motif motif. In terms of domain architecture, Helicase ATP-binding spans 106–297 (ISPALKGKDI…RSYIDKNNFE (192 aa)). 119–126 (AKTGTGKT) is a binding site for ATP. The DEAD box motif lies at 241–244 (DEAD). Residues 329-493 (AMLELIEKAL…CASVNAADSG (165 aa)) form the Helicase C-terminal domain. The segment at 569 to 626 (LRVETREHSMRPMGSGPGHRRDFNSRGPRRQSDDPFENALHRAQDLDRRPTRRQQASF) is disordered. Residues 578–626 (MRPMGSGPGHRRDFNSRGPRRQSDDPFENALHRAQDLDRRPTRRQQASF) form an RNA-binding region. Residues 607-617 (ALHRAQDLDRR) show a composition bias toward basic and acidic residues.

It belongs to the DEAD box helicase family.

It is found in the mitochondrion matrix. The catalysed reaction is ATP + H2O = ADP + phosphate + H(+). Its activity is regulated as follows. Activated by exposed helices in a group I intron RNA. In terms of biological role, acts as an RNA chaperone to resolve non-native structures formed during RNA folding to promote mitochondrial group I, but also group II, intron splicing. Functions predominantly by disrupting accessible RNA secondary structure and depends on spontaneous openings in tightly packed RNAs to gain access to RNA helices. The polypeptide is ATP-dependent RNA helicase cyt-19, mitochondrial (Neurospora crassa (strain ATCC 24698 / 74-OR23-1A / CBS 708.71 / DSM 1257 / FGSC 987)).